The following is a 532-amino-acid chain: tRNA-2-methylthio-N(6)-dimethylallyladenosine synthase 2 (532 aa).

Residues Met-1–Met-21 are disordered. The MTTase N-terminal domain occupies Arg-24–His-140. The [4Fe-4S] cluster site is built by Cys-33, Cys-69, Cys-103, Cys-177, Cys-181, and Cys-184. The region spanning Arg-163–Glu-399 is the Radical SAM core domain. The TRAM domain maps to Arg-402 to Ile-470. The tract at residues Thr-510–Gln-532 is disordered. The segment covering Gly-523–Gln-532 has biased composition (low complexity).

This sequence belongs to the methylthiotransferase family. MiaB subfamily. As to quaternary structure, monomer. [4Fe-4S] cluster serves as cofactor.

Its subcellular location is the cytoplasm. The catalysed reaction is N(6)-dimethylallyladenosine(37) in tRNA + (sulfur carrier)-SH + AH2 + 2 S-adenosyl-L-methionine = 2-methylsulfanyl-N(6)-dimethylallyladenosine(37) in tRNA + (sulfur carrier)-H + 5'-deoxyadenosine + L-methionine + A + S-adenosyl-L-homocysteine + 2 H(+). Catalyzes the methylthiolation of N6-(dimethylallyl)adenosine (i(6)A), leading to the formation of 2-methylthio-N6-(dimethylallyl)adenosine (ms(2)i(6)A) at position 37 in tRNAs that read codons beginning with uridine. The polypeptide is tRNA-2-methylthio-N(6)-dimethylallyladenosine synthase 2 (Mycobacterium marinum (strain ATCC BAA-535 / M)).